Here is a 523-residue protein sequence, read N- to C-terminus: Coatomer subunit delta-2 (523 aa).

The interval 218–243 (DSFASKPKGRPSAAATAPGKGLGMKL) is disordered. An MHD domain is found at 282–523 (SDPVTVTIEE…RLVTANYQVV (242 aa)).

This sequence belongs to the adaptor complexes medium subunit family. Delta-COP subfamily. In terms of assembly, oligomeric complex that consists of at least the alpha, beta, beta', gamma, delta, epsilon and zeta subunits.

Its subcellular location is the cytoplasm. The protein resides in the golgi apparatus membrane. It is found in the cytoplasmic vesicle. The protein localises to the COPI-coated vesicle membrane. Its function is as follows. The coatomer is a cytosolic protein complex that binds to dilysine motifs and reversibly associates with Golgi non-clathrin-coated vesicles, which further mediate biosynthetic protein transport from the ER, via the Golgi up to the trans Golgi network. Coatomer complex is required for budding from Golgi membranes, and is essential for the retrograde Golgi-to-ER transport of dilysine-tagged proteins. This chain is Coatomer subunit delta-2, found in Oryza sativa subsp. japonica (Rice).